Here is a 179-residue protein sequence, read N- to C-terminus: Ubiquitin-conjugating enzyme E2 C (179 aa).

A2 bears the N-acetylalanine mark. At S3 the chain carries Phosphoserine. The UBC core domain occupies 30 to 175 (PVGKRLQQEL…LQETYSKQVS (146 aa)). The active-site Glycyl thioester intermediate is C114.

Belongs to the ubiquitin-conjugating enzyme family. In terms of assembly, component of the APC/C complex, composed of at least 14 distinct subunits that assemble into a complex of at least 19 chains with a combined molecular mass of around 1.2 MDa. Within this complex, directly interacts with ANAPC2. Autoubiquitinated by the APC/C complex, leading to its degradation by the proteasome. Its degradation plays a central role in APC/C regulation, allowing cyclin-A accumulation before S phase entry. APC/C substrates inhibit the autoubiquitination of UBE2C/UBCH10 but not its E2 function, hence APC/C remaining active until its substrates have been destroyed.

The enzyme catalyses S-ubiquitinyl-[E1 ubiquitin-activating enzyme]-L-cysteine + [E2 ubiquitin-conjugating enzyme]-L-cysteine = [E1 ubiquitin-activating enzyme]-L-cysteine + S-ubiquitinyl-[E2 ubiquitin-conjugating enzyme]-L-cysteine.. It carries out the reaction S-ubiquitinyl-[E1 ubiquitin-activating enzyme]-L-cysteine + [acceptor protein]-L-lysine = [E1 ubiquitin-activating enzyme]-L-cysteine + N(6)-monoubiquitinyl-[acceptor protein]-L-lysine.. It participates in protein modification; protein ubiquitination. Its function is as follows. Accepts ubiquitin from the E1 complex and catalyzes its covalent attachment to other proteins. In vitro catalyzes 'Lys-11'- and 'Lys-48'-linked polyubiquitination. Acts as an essential factor of the anaphase promoting complex/cyclosome (APC/C), a cell cycle-regulated ubiquitin ligase that controls progression through mitosis. Acts by initiating 'Lys-11'-linked polyubiquitin chains on APC/C substrates, leading to the degradation of APC/C substrates by the proteasome and promoting mitotic exit. The chain is Ubiquitin-conjugating enzyme E2 C (Ube2c) from Mus musculus (Mouse).